Reading from the N-terminus, the 521-residue chain is U4/U6 small nuclear ribonucleoprotein Prp4 (521 aa).

K26 carries the post-translational modification N6-acetyllysine. WD repeat units lie at residues 228–267 (GDDRPISYCHFSPNSKMLATACWSGLCKLWSVPDCNLLHT), 270–317 (GHNT…PVAD), 320–359 (GHTVRVARVMWHPSGRFLGTTCYDRSWRLWDLEAQEEILH), 362–401 (GHSMGVYDIAFHQDGSLAGTGGLDAFGRVWDLRTGRCIMF), 404–443 (GHLKEIYGINFSPNGYHIATGSGDNTCKVWDLRQRRCVYT), 446–486 (AHQN…PLKT), and 489–521 (GHEGKVMGLDISSDGQLIATCSYDRTFKLWMAE).

In terms of assembly, component of the precatalytic spliceosome (spliceosome B complex). Component of the U4/U6-U5 tri-snRNP complex, a building block of the precatalytic spliceosome (spliceosome B complex). The U4/U6-U5 tri-snRNP complex is composed of the U4, U6 and U5 snRNAs and at least PRPF3, PRPF4, PRPF6, PRPF8, PRPF31, SNRNP200, TXNL4A, SNRNP40, SNRPB, SNRPD1, SNRPD2, SNRPD3, SNRPE, SNRPF, SNRPG, DDX23, CD2BP2, PPIH, SNU13, EFTUD2, SART1 and USP39, plus LSM2, LSM3, LSM4, LSM5, LSM6, LSM7 and LSM8. Interacts directly with PRPF18, PPIH and PRPF3. Part of a heteromeric complex containing PPIH, PRPF3 and PRPF4 that is stable in the absence of RNA. Interacts with ERCC6.

It is found in the nucleus. The protein resides in the nucleus speckle. Plays a role in pre-mRNA splicing as component of the U4/U6-U5 tri-snRNP complex that is involved in spliceosome assembly, and as component of the precatalytic spliceosome (spliceosome B complex). This is U4/U6 small nuclear ribonucleoprotein Prp4 (PRPF4) from Pongo abelii (Sumatran orangutan).